The sequence spans 255 residues: NAD kinase (255 aa).

Residue aspartate 44 is the Proton acceptor of the active site. Residues 44–45 (DG), histidine 49, 114–115 (NE), aspartate 144, alanine 152, 155–160 (SAYNLS), and glutamine 216 contribute to the NAD(+) site.

This sequence belongs to the NAD kinase family. Requires a divalent metal cation as cofactor.

It localises to the cytoplasm. The catalysed reaction is NAD(+) + ATP = ADP + NADP(+) + H(+). Involved in the regulation of the intracellular balance of NAD and NADP, and is a key enzyme in the biosynthesis of NADP. Catalyzes specifically the phosphorylation on 2'-hydroxyl of the adenosine moiety of NAD to yield NADP. This chain is NAD kinase, found in Rickettsia prowazekii (strain Madrid E).